The sequence spans 424 residues: Probable serine/threonine-protein kinase PBL15 (424 aa).

Residues phenylalanine 99 to isoleucine 380 form the Protein kinase domain. ATP is bound by residues leucine 105 to valine 113 and lysine 134. A Phosphotyrosine modification is found at tyrosine 179. The active-site Proton acceptor is the aspartate 229. Position 233 is a phosphoserine (serine 233). 2 positions are modified to phosphothreonine: threonine 264 and threonine 269. Phosphotyrosine is present on tyrosine 277. A disordered region spans residues glycine 390–serine 424.

It belongs to the protein kinase superfamily. Ser/Thr protein kinase family. Interacts with the Xanthomonas campestris effector XopAC/AvrAC.

It is found in the cell membrane. The catalysed reaction is L-seryl-[protein] + ATP = O-phospho-L-seryl-[protein] + ADP + H(+). It catalyses the reaction L-threonyl-[protein] + ATP = O-phospho-L-threonyl-[protein] + ADP + H(+). Functionally, may be involved in plant defense signaling. This Arabidopsis thaliana (Mouse-ear cress) protein is Probable serine/threonine-protein kinase PBL15.